The following is a 400-amino-acid chain: Cytochrome b (400 aa).

The chain crosses the membrane as a helical span at residues 47–67; sequence LGSIAGIALVIQIITGVILAM. Heme b is bound by residues His97 and His111. 8 helical membrane passes run 98–118, 131–151, 166–186, 194–214, 247–267, 306–326, 341–361, and 368–388; these read AVGASMFFAAVYLHIARGLYY, IGIIIFLTMMATAFMGYVLPW, FSAIPLIGKSIVTWLWGGFSV, FFSLHYLLPFIIVALVMLHLV, FVGFGVYFIIFAYFIFYEPNY, LGGVLLMFGSIFVLFLLPWLD, IAFWIFMADCLLLGYLGGQPA, and ISRFAACYYFFHFLVALPLIG. Heme b contacts are provided by His198 and His212.

It belongs to the cytochrome b family. The main subunits of complex b-c1 are: cytochrome b, cytochrome c1 and the Rieske protein. Requires heme b as cofactor.

Its subcellular location is the cell membrane. Functionally, component of the ubiquinol-cytochrome c reductase complex (complex III or cytochrome b-c1 complex), which is a respiratory chain that generates an electrochemical potential coupled to ATP synthesis. This is Cytochrome b (petB) from Rickettsia bellii (strain RML369-C).